The sequence spans 363 residues: Chorismate synthase (363 aa).

R48 and R54 together coordinate NADP(+). FMN-binding positions include 125–127 (RSS), 237–238 (NA), G277, 292–296 (KPTSS), and R318.

This sequence belongs to the chorismate synthase family. In terms of assembly, homotetramer. It depends on FMNH2 as a cofactor.

The enzyme catalyses 5-O-(1-carboxyvinyl)-3-phosphoshikimate = chorismate + phosphate. It functions in the pathway metabolic intermediate biosynthesis; chorismate biosynthesis; chorismate from D-erythrose 4-phosphate and phosphoenolpyruvate: step 7/7. In terms of biological role, catalyzes the anti-1,4-elimination of the C-3 phosphate and the C-6 proR hydrogen from 5-enolpyruvylshikimate-3-phosphate (EPSP) to yield chorismate, which is the branch point compound that serves as the starting substrate for the three terminal pathways of aromatic amino acid biosynthesis. This reaction introduces a second double bond into the aromatic ring system. The polypeptide is Chorismate synthase (Stutzerimonas stutzeri (strain A1501) (Pseudomonas stutzeri)).